Here is a 75-residue protein sequence, read N- to C-terminus: Putative membrane protein insertion efficiency factor (75 aa).

It belongs to the UPF0161 family.

It localises to the cell inner membrane. Its function is as follows. Could be involved in insertion of integral membrane proteins into the membrane. This chain is Putative membrane protein insertion efficiency factor, found in Leptospira biflexa serovar Patoc (strain Patoc 1 / ATCC 23582 / Paris).